The sequence spans 130 residues: Classical arabinogalactan protein 7 (130 aa).

The signal sequence occupies residues 1–21 (MNSKIIEAFFIVALFTTSCLA). A Pyrrolidone carboxylic acid modification is found at Gln22. The disordered stretch occupies residues 22-108 (QAPAPSPTTT…DASAPPPNAA (87 aa)). Pro24, Pro26, Pro28, Pro35, and Pro36 each carry 4-hydroxyproline. Residues Pro24, Pro26, Pro28, Pro35, and Pro36 are each glycosylated (O-linked (Ara...) hydroxyproline). Residues 33-68 (TPPPVATPPPAATPAPTTTPPPAVSPAPTSSPPSSA) show a composition bias toward pro residues. Asn106 carries the GPI-anchor amidated asparagine lipid modification. A propeptide spans 107 to 130 (AALTNKAFVVGSLVAAIIYAVVLA) (removed in mature form).

The protein belongs to the classical AGP family. Post-translationally, O-glycosylated on hydroxyprolines; noncontiguous hydroxylproline residues are glycosylated with arabinogalactan.

The protein localises to the cell membrane. In terms of biological role, proteoglycan that seems to be implicated in diverse developmental roles such as differentiation, cell-cell recognition, embryogenesis and programmed cell death. This is Classical arabinogalactan protein 7 (AGP7) from Arabidopsis thaliana (Mouse-ear cress).